Consider the following 131-residue polypeptide: Translation initiation factor 5A (131 aa).

A Hypusine modification is found at lysine 37.

Belongs to the eIF-5A family.

Its subcellular location is the cytoplasm. In terms of biological role, functions by promoting the formation of the first peptide bond. In Methanococcus aeolicus (strain ATCC BAA-1280 / DSM 17508 / OCM 812 / Nankai-3), this protein is Translation initiation factor 5A (eIF5A).